The sequence spans 288 residues: Probable coatomer subunit epsilon (288 aa).

Serine 262 carries the phosphoserine modification.

It belongs to the COPE family. In terms of assembly, oligomeric complex that consists of at least the alpha, beta, beta', gamma, delta, epsilon and zeta subunits.

The protein resides in the cytoplasm. Its subcellular location is the golgi apparatus membrane. The protein localises to the cytoplasmic vesicle. It localises to the COPI-coated vesicle membrane. Functionally, the coatomer is a cytosolic protein complex that binds to dilysine motifs and reversibly associates with Golgi non-clathrin-coated vesicles, which further mediate biosynthetic protein transport from the ER, via the Golgi up to the trans Golgi network. The coatomer complex is required for budding from Golgi membranes, and is essential for the retrograde Golgi-to-ER transport of dilysine-tagged proteins. This is Probable coatomer subunit epsilon (sec28) from Schizosaccharomyces pombe (strain 972 / ATCC 24843) (Fission yeast).